The chain runs to 344 residues: GTPase Obg (344 aa).

One can recognise an Obg domain in the interval 1 to 159; it reads MKFLDLAKVY…RTIWLRLKLI (159 aa). Positions 160–326 constitute an OBG-type G domain; it reads ADVGLLGLPN…VLRVLRARVD (167 aa). GTP is bound by residues 166–173, 191–195, 212–215, 279–282, and 307–309; these read GLPNAGKS, FTTLV, DIPG, NKID, and SGV. Mg(2+) contacts are provided by serine 173 and threonine 193.

Belongs to the TRAFAC class OBG-HflX-like GTPase superfamily. OBG GTPase family. As to quaternary structure, monomer. Requires Mg(2+) as cofactor.

The protein localises to the cytoplasm. Functionally, an essential GTPase which binds GTP, GDP and possibly (p)ppGpp with moderate affinity, with high nucleotide exchange rates and a fairly low GTP hydrolysis rate. Plays a role in control of the cell cycle, stress response, ribosome biogenesis and in those bacteria that undergo differentiation, in morphogenesis control. The sequence is that of GTPase Obg from Jannaschia sp. (strain CCS1).